Reading from the N-terminus, the 362-residue chain is Phosphatidylserine decarboxylase proenzyme (362 aa).

A helical membrane pass occupies residues 26 to 44 (YLLTGVTILSFIFMFQYKY). Active-site charge relay system; for autoendoproteolytic cleavage activity residues include D147, H206, and S316. S316 acts as the Schiff-base intermediate with substrate; via pyruvic acid; for decarboxylase activity in catalysis. S316 is modified (pyruvic acid (Ser); by autocatalysis).

The protein belongs to the phosphatidylserine decarboxylase family. PSD-B subfamily. Eukaryotic type I sub-subfamily. Heterodimer of a large membrane-associated beta subunit and a small pyruvoyl-containing alpha subunit. The cofactor is pyruvate. Is synthesized initially as an inactive proenzyme. Formation of the active enzyme involves a self-maturation process in which the active site pyruvoyl group is generated from an internal serine residue via an autocatalytic post-translational modification. Two non-identical subunits are generated from the proenzyme in this reaction, and the pyruvate is formed at the N-terminus of the alpha chain, which is derived from the carboxyl end of the proenzyme. The autoendoproteolytic cleavage occurs by a canonical serine protease mechanism, in which the side chain hydroxyl group of the serine supplies its oxygen atom to form the C-terminus of the beta chain, while the remainder of the serine residue undergoes an oxidative deamination to produce ammonia and the pyruvoyl prosthetic group on the alpha chain. During this reaction, the Ser that is part of the protease active site of the proenzyme becomes the pyruvoyl prosthetic group, which constitutes an essential element of the active site of the mature decarboxylase.

The protein resides in the endoplasmic reticulum membrane. The catalysed reaction is a 1,2-diacyl-sn-glycero-3-phospho-L-serine + H(+) = a 1,2-diacyl-sn-glycero-3-phosphoethanolamine + CO2. The protein operates within phospholipid metabolism; phosphatidylethanolamine biosynthesis; phosphatidylethanolamine from CDP-diacylglycerol: step 2/2. Its function is as follows. Catalyzes the formation of phosphatidylethanolamine (PtdEtn) from phosphatidylserine (PtdSer). Plays a central role in phospholipid metabolism and in the interorganelle trafficking of phosphatidylserine. This chain is Phosphatidylserine decarboxylase proenzyme, found in Plasmodium falciparum.